The sequence spans 143 residues: Putative pre-16S rRNA nuclease (143 aa).

Belongs to the YqgF nuclease family.

The protein resides in the cytoplasm. Functionally, could be a nuclease involved in processing of the 5'-end of pre-16S rRNA. This is Putative pre-16S rRNA nuclease from Lactobacillus johnsonii (strain CNCM I-12250 / La1 / NCC 533).